We begin with the raw amino-acid sequence, 284 residues long: Protein pxr1 (284 aa).

Residues 25–71 (TNRLGFKLLSSYGWVNGNGLGEKQHGRIHNIKVSLKDDTLGIGAKAT) enclose the G-patch domain. The disordered stretch occupies residues 149-253 (DEDRVCEDAS…KVKEGNRPAS (105 aa)). Phosphoserine occurs at positions 159 and 160. Composition is skewed to basic residues over residues 166–181 (EKRK…KKKT) and 196–206 (TKKKKKEHKKK). Basic and acidic residues-rich tracts occupy residues 207 to 224 (DKES…DKEE) and 233 to 249 (KDKP…KEGN).

Belongs to the PINX1 family.

Its subcellular location is the nucleus. It localises to the nucleolus. In terms of biological role, involved in rRNA-processing at A0, A1 and A2 sites and negatively regulates telomerase. This chain is Protein pxr1 (pxr1), found in Schizosaccharomyces pombe (strain 972 / ATCC 24843) (Fission yeast).